A 698-amino-acid polypeptide reads, in one-letter code: Polyribonucleotide nucleotidyltransferase (698 aa).

Positions 485 and 491 each coordinate Mg(2+). Positions 552-611 (PRITTIKINPEKIRDVIGKGGAVIRALTEETGTTIELDDDGTVKIASSNGEATKEAIRRI) constitute a KH domain. Residues 621–689 (GRVYNGKVIR…RQGRVRLSIK (69 aa)) form the S1 motif domain.

Belongs to the polyribonucleotide nucleotidyltransferase family. As to quaternary structure, component of the RNA degradosome, which is a multiprotein complex involved in RNA processing and mRNA degradation. Mg(2+) is required as a cofactor.

The protein localises to the cytoplasm. It catalyses the reaction RNA(n+1) + phosphate = RNA(n) + a ribonucleoside 5'-diphosphate. In terms of biological role, involved in mRNA degradation. Catalyzes the phosphorolysis of single-stranded polyribonucleotides processively in the 3'- to 5'-direction. The protein is Polyribonucleotide nucleotidyltransferase of Shewanella denitrificans (strain OS217 / ATCC BAA-1090 / DSM 15013).